A 586-amino-acid chain; its full sequence is Pescadillo homolog (586 aa).

The required for 28S ribosomal RNA processing stretch occupies residues 1 to 54; that stretch reads MGGLEKKKYERGSATNYITRNKARKKLQLSLPDFRRLCILKGIYPHEPKHKKKV. The sufficient for nucleolar localization stretch occupies residues 1 to 257; sequence MGGLEKKKYE…PKIESQAQAE (257 aa). The residue at position 98 (K98) is an N6-acetyllysine. The interval 305–414 is sufficient for interaction with MAP1B; the sequence is VTAQEEDRRK…LLLPVAEYFP (110 aa). The BRCT domain occupies 321 to 414; sequence KHKKLFEGLK…LLLPVAEYFP (94 aa). The interval 447 to 508 is disordered; the sequence is GEDPGNLEEE…QQRLGGKKPQ (62 aa). The span at 451-491 shows a compositional bias: acidic residues; the sequence is GNLEEEEEDEDDEGDDSEGDGDVAVENEEEVVEAESEEEEE. K515 participates in a covalent cross-link: Glycyl lysine isopeptide (Lys-Gly) (interchain with G-Cter in SUMO1); alternate. Residue K515 forms a Glycyl lysine isopeptide (Lys-Gly) (interchain with G-Cter in SUMO2); alternate linkage. The segment at 537-586 is required for 28S ribosomal RNA processing; the sequence is MMKKREKYLYQKIMFGKRRKIREANKLAEKRKAHDDAVRSEKKAKRTRPV. Over residues 562–577 the composition is skewed to basic and acidic residues; that stretch reads KLAEKRKAHDDAVRSE. The segment at 562-586 is disordered; sequence KLAEKRKAHDDAVRSEKKAKRTRPV.

This sequence belongs to the pescadillo family. As to quaternary structure, component of the PeBoW complex, composed of BOP1, PES1 and WDR12. The complex is held together by BOP1, which interacts with PES1 via its N-terminal domain and with WDR12 via a high-affinity interaction between the seven-bladed beta-propeller domains of the 2 proteins. The PeBoW complex associates with the 66S pre-ribosome. The PeBoW complex also associates with DDX27, PES1 interacts directly with DDX27. Interacts with IRS1 and UBTF. May interact with MAP1B. Sumoylated.

Its subcellular location is the nucleus. It is found in the nucleolus. The protein localises to the nucleoplasm. The protein resides in the chromosome. In terms of biological role, component of the PeBoW complex, which is required for maturation of 28S and 5.8S ribosomal RNAs and formation of the 60S ribosome. The protein is Pescadillo homolog (Pes1) of Rattus norvegicus (Rat).